Consider the following 259-residue polypeptide: UPF0246 protein NMB0895 (259 aa).

It belongs to the UPF0246 family.

The protein is UPF0246 protein NMB0895 of Neisseria meningitidis serogroup B (strain ATCC BAA-335 / MC58).